Reading from the N-terminus, the 396-residue chain is Protein NDRG1-B (396 aa).

A disordered region spans residues 326–396 (RSRTGSAASS…NTPKSMEVSC (71 aa)). The segment covering 327–340 (SRTGSAASSSSQDG) has biased composition (low complexity). 4 tandem repeats follow at residues 340 to 349 (GNRSRSHTNE), 350 to 359 (GSRSRSQTGD), 360 to 369 (GNRSRAHTGD), and 370 to 379 (GNRSRSHTDT). A 4 X 10 AA tandem repeats of G-[NS]-R-S-R-[AS]-[HQ]-T-[DGN]-[DET] region spans residues 340-379 (GNRSRSHTNEGSRSRSQTGDGNRSRAHTGDGNRSRSHTDT). Basic and acidic residues predominate over residues 366-377 (HTGDGNRSRSHT). Residues 378 to 390 (DTNNVNSDHNTPK) show a composition bias toward polar residues.

It belongs to the NDRG family.

In terms of biological role, may be involved in pronephros development, after specification of the pronephros. The chain is Protein NDRG1-B (ndrg1-b) from Xenopus laevis (African clawed frog).